Here is a 528-residue protein sequence, read N- to C-terminus: UDP-glucuronosyltransferase 2A1 (528 aa).

An N-terminal signal peptide occupies residues 1–21; that stretch reads MLKNILLCSLQISLLGMSLGG. Over 22 to 494 the chain is Extracellular; the sequence is NVLIWPMEGS…FQYHSLDVIG (473 aa). Asn-49 carries an N-linked (GlcNAc...) asparagine glycan. Lys-135 bears the N6-succinyllysine mark. Residue Asn-314 is glycosylated (N-linked (GlcNAc...) asparagine). A helical transmembrane segment spans residues 495-515; that stretch reads FLLACVASAILLVAKCCLFIF. Residues 516 to 528 are Cytoplasmic-facing; sequence QKVGKTGKKKKRD.

This sequence belongs to the UDP-glycosyltransferase family.

It localises to the membrane. It catalyses the reaction glucuronate acceptor + UDP-alpha-D-glucuronate = acceptor beta-D-glucuronoside + UDP + H(+). It carries out the reaction 16beta,17beta-estriol + UDP-alpha-D-glucuronate = 16beta,17beta-estriol 16-O-(beta-D-glucuronate) + UDP + H(+). The enzyme catalyses 16alpha,17alpha-estriol + UDP-alpha-D-glucuronate = 16alpha,17alpha-estriol 16-O-(beta-D-glucuronate) + UDP + H(+). The catalysed reaction is 17alpha-estradiol + UDP-alpha-D-glucuronate = 17alpha-estradiol 17-O-(beta-D-glucuronate) + UDP + H(+). It catalyses the reaction 17alpha-estradiol + UDP-alpha-D-glucuronate = 17alpha-estradiol 3-O-(beta-D-glucuronate) + UDP + H(+). It carries out the reaction 17beta-estradiol + UDP-alpha-D-glucuronate = 17beta-estradiol 3-O-(beta-D-glucuronate) + UDP + H(+). The enzyme catalyses 17beta-estradiol + UDP-alpha-D-glucuronate = 17beta-estradiol 17-O-(beta-D-glucuronate) + UDP + H(+). The catalysed reaction is testosterone + UDP-alpha-D-glucuronate = testosterone 17-O-(beta-D-glucuronate) + UDP + H(+). It catalyses the reaction epitestosterone + UDP-alpha-D-glucuronate = epitestosterone 17-O-(beta-D-glucuronate) + UDP + H(+). It carries out the reaction lithocholate + UDP-alpha-D-glucuronate = lithocholoyl-3-O-(beta-D-glucuronate) + UDP + H(+). The enzyme catalyses lithocholate + UDP-alpha-D-glucuronate = lithocholoyl-24-O-(beta-D-glucuronate) + UDP. The catalysed reaction is deoxycholate + UDP-alpha-D-glucuronate = deoxycholoyl-24-O-(beta-D-glucuronate) + UDP. It catalyses the reaction hyodeoxycholate + UDP-alpha-D-glucuronate = hyodeoxycholate 6-O-(beta-D-glucuronate) + UDP + H(+). It carries out the reaction hyocholate + UDP-alpha-D-glucuronate = hyocholoyl-24-O-(beta-D-glucuronate) + UDP. In terms of biological role, UDP-glucuronosyltransferase (UGT) that catalyzes phase II biotransformation reactions in which lipophilic substrates are conjugated with glucuronic acid to increase the metabolite's water solubility, thereby facilitating excretion into either the urine or bile. Essential for the elimination and detoxification of drugs, xenobiotics and endogenous compounds. Catalyzes the glucuronidation of endogenous steroid hormones such as androgens (testosterones) and estrogens (estradiol and estriol). Contributes to bile acid (BA) detoxification by catalyzing the glucuronidation of BA substrates, which are natural detergents for dietary lipids absorption. Shows a high affinity to aliphatic odorants such as citronellol as well as olfactory tissue specificity, and therefore may be involved in olfaction. The chain is UDP-glucuronosyltransferase 2A1 from Mus musculus (Mouse).